The primary structure comprises 249 residues: Acidic leucine-rich nuclear phosphoprotein 32 family member A (249 aa).

At threonine 15 the chain carries Phosphothreonine. Serine 17 bears the Phosphoserine mark. 4 LRR repeats span residues 18 to 41 (DVKELVLDNCRSIEGKIEGLTDEF), 43 to 64 (ELEFLSTINVGLTSVANLPKLN), 65 to 87 (KLKKLELSDNRISGGLEVLAEKC), and 89 to 110 (NLTHLNLSGNKIKDLSTIEPLK). The region spanning 123–161 (CEVTNLNDYRENVFKLLPQLTYLDGYDRDDKEAPDSDAE) is the LRRCT domain. Over residues 147–156 (GYDRDDKEAP) the composition is skewed to basic and acidic residues. The disordered stretch occupies residues 147-249 (GYDRDDKEAP…EPXDXGEDDD (103 aa)). A necessary for tumor-suppressive function region spans residues 150-174 (RDDKEAPDSDAEGYVEGLDDDEEDE). The span at 157–230 (DSDAEGYVEG…DEEDEEDVGE (74 aa)) shows a compositional bias: acidic residues. Residues serine 158 and serine 204 each carry the phosphoserine modification. An interaction with E4F1 region spans residues 165–249 (EGLDDDEEDE…EPXDXGEDDD (85 aa)).

The protein belongs to the ANP32 family. Component of the SET complex, composed of at least ANP32A, APEX1, HMGB2, NME1, SET and TREX1. Directly interacts with SET. Interacts with ATXN1/SCA1. Interacts with MAP1B. Interacts with ELAVL1. Part of the INHAT (inhibitor of histone acetyltransferases) complex. Interacts with E4F1. Phosphorylated on serine residues, at least in part by casein kinase 2/CK2. In terms of processing, some glutamate residues are glycylated by TTLL8. This modification occurs exclusively on glutamate residues and results in a glycine chain on the gamma-carboxyl group.

It is found in the nucleus. It localises to the cytoplasm. Its subcellular location is the endoplasmic reticulum. Multifunctional protein that is involved in the regulation of many processes including tumor suppression, apoptosis, cell cycle progression or transcription. Promotes apoptosis by favouring the activation of caspase-9/CASP9 and allowing apoptosome formation. In addition, plays a role in the modulation of histone acetylation and transcription as part of the INHAT (inhibitor of histone acetyltransferases) complex. Inhibits the histone-acetyltranferase activity of EP300/CREBBP (CREB-binding protein) and EP300/CREBBP-associated factor by histone masking. Preferentially binds to unmodified histone H3 and sterically inhibiting its acetylation and phosphorylation leading to cell growth inhibition. Participates in other biochemical processes such as regulation of mRNA nuclear-to-cytoplasmic translocation and stability by its association with ELAVL1 (Hu-antigen R). Plays a role in E4F1-mediated transcriptional repression as well as inhibition of protein phosphatase 2A. The polypeptide is Acidic leucine-rich nuclear phosphoprotein 32 family member A (ANP32A) (Canis lupus familiaris (Dog)).